A 365-amino-acid polypeptide reads, in one-letter code: Phosphoserine aminotransferase (365 aa).

An L-glutamate-binding site is contributed by Arg42. Pyridoxal 5'-phosphate-binding positions include 76 to 77, Trp102, Thr156, Asp175, and Gln198; that span reads GR. Position 199 is an N6-(pyridoxal phosphate)lysine (Lys199). 240 to 241 is a binding site for pyridoxal 5'-phosphate; sequence NT.

It belongs to the class-V pyridoxal-phosphate-dependent aminotransferase family. SerC subfamily. As to quaternary structure, homodimer. It depends on pyridoxal 5'-phosphate as a cofactor.

The protein localises to the cytoplasm. It carries out the reaction O-phospho-L-serine + 2-oxoglutarate = 3-phosphooxypyruvate + L-glutamate. It catalyses the reaction 4-(phosphooxy)-L-threonine + 2-oxoglutarate = (R)-3-hydroxy-2-oxo-4-phosphooxybutanoate + L-glutamate. It functions in the pathway amino-acid biosynthesis; L-serine biosynthesis; L-serine from 3-phospho-D-glycerate: step 2/3. It participates in cofactor biosynthesis; pyridoxine 5'-phosphate biosynthesis; pyridoxine 5'-phosphate from D-erythrose 4-phosphate: step 3/5. In terms of biological role, catalyzes the reversible conversion of 3-phosphohydroxypyruvate to phosphoserine and of 3-hydroxy-2-oxo-4-phosphonooxybutanoate to phosphohydroxythreonine. The polypeptide is Phosphoserine aminotransferase (Shewanella oneidensis (strain ATCC 700550 / JCM 31522 / CIP 106686 / LMG 19005 / NCIMB 14063 / MR-1)).